The chain runs to 219 residues: uncharacterized protein (219 aa).

This is an uncharacterized protein from Escherichia coli (Bacteriophage T4).